We begin with the raw amino-acid sequence, 240 residues long: MMKFVASEISSIMELQMRSEPISSSNRATKRTISSSSSSSSSSAGFDSYCVSLAVGPLWWSDVPQSRTDHDRASPLKEYNRKTSIDSTTTASSEFTDYDDTESTVEFMNQHEAAVIQEVLNQPTPTQISLKLFVTPQKYSVWETVFNPLDNILYVNLPSTMTHEASKHSFISLLEFAEEKLECDAVVLCIRKDRLDRPNLVRTFSFVGFQPVSPKSPLAPPHIEEQQKNDYLFMIYNIEE.

Disordered regions lie at residues 18–45 (RSEPISSSNRATKRTISSSSSSSSSSAG) and 69–95 (DHDRASPLKEYNRKTSIDSTTTASSEF). A compositionally biased stretch (polar residues) spans 21 to 33 (PISSSNRATKRTI). Low complexity predominate over residues 34 to 43 (SSSSSSSSSS). The span at 69–84 (DHDRASPLKEYNRKTS) shows a compositional bias: basic and acidic residues. Polar residues predominate over residues 85-95 (IDSTTTASSEF).

Belongs to the ODC antizyme family. Interacts with ODC1 and thereby sterically blocks ODC homodimerization. As to expression, preferentially expressed in adult female midguts.

In terms of biological role, ornithine decarboxylase (ODC) antizyme protein that negatively regulates ODC activity and intracellular polyamine biosynthesis and uptake in response to increased intracellular polyamine levels. Binds to ODC monomers, inhibiting the assembly of the functional ODC homodimer, and targets the monomers for ubiquitin-independent proteolytic destruction by the 26S proteasome. In Aedes aegypti (Yellowfever mosquito), this protein is Ornithine decarboxylase antizyme (Oda).